The primary structure comprises 239 residues: tRNA (guanine-N(1)-)-methyltransferase (239 aa).

Residues Gly110 and 130–135 (IGDYVL) each bind S-adenosyl-L-methionine.

This sequence belongs to the RNA methyltransferase TrmD family. Homodimer.

The protein localises to the cytoplasm. The enzyme catalyses guanosine(37) in tRNA + S-adenosyl-L-methionine = N(1)-methylguanosine(37) in tRNA + S-adenosyl-L-homocysteine + H(+). Specifically methylates guanosine-37 in various tRNAs. This Borrelia garinii subsp. bavariensis (strain ATCC BAA-2496 / DSM 23469 / PBi) (Borreliella bavariensis) protein is tRNA (guanine-N(1)-)-methyltransferase.